A 187-amino-acid chain; its full sequence is UPF0301 protein Sala_0165 (187 aa).

This sequence belongs to the UPF0301 (AlgH) family.

The sequence is that of UPF0301 protein Sala_0165 from Sphingopyxis alaskensis (strain DSM 13593 / LMG 18877 / RB2256) (Sphingomonas alaskensis).